The chain runs to 220 residues: MHTLDGKKIVVASHNAGKLREFADLMGPFGFEAKSAKDYGLPEPDETGTTFEENAYIKALAAAKATGLPALSDDSGLCVDALDGAPGVYTANWAETPDGSRDFAMAMQRTEVALQEVGAASAEQRKGRFVAVICLAFPDGAAEYYRGEAEGTLVWPPRGELGFGYDPVFLPNGFDKTFGEMSAEEKHGWKPGQAAALSHRARAFQKFAQARLDLPRLGSA.

13–18 (SHNAGK) lines the substrate pocket. 2 residues coordinate Mg(2+): D45 and D74. Residue D74 is the Proton acceptor of the active site. Substrate is bound by residues S75, 163–166 (FGYD), K186, and 199–200 (HR).

This sequence belongs to the HAM1 NTPase family. In terms of assembly, homodimer. The cofactor is Mg(2+).

It carries out the reaction XTP + H2O = XMP + diphosphate + H(+). It catalyses the reaction dITP + H2O = dIMP + diphosphate + H(+). The enzyme catalyses ITP + H2O = IMP + diphosphate + H(+). Its function is as follows. Pyrophosphatase that catalyzes the hydrolysis of nucleoside triphosphates to their monophosphate derivatives, with a high preference for the non-canonical purine nucleotides XTP (xanthosine triphosphate), dITP (deoxyinosine triphosphate) and ITP. Seems to function as a house-cleaning enzyme that removes non-canonical purine nucleotides from the nucleotide pool, thus preventing their incorporation into DNA/RNA and avoiding chromosomal lesions. The sequence is that of dITP/XTP pyrophosphatase from Mesorhizobium japonicum (strain LMG 29417 / CECT 9101 / MAFF 303099) (Mesorhizobium loti (strain MAFF 303099)).